Here is a 431-residue protein sequence, read N- to C-terminus: Islet cell autoantigen 1-like protein (431 aa).

Residues 44–247 (ASDAELDAKL…TAQMMTQIQE (204 aa)) form the AH domain. 2 disordered regions span residues 295–316 (EEEE…PRDS) and 351–372 (CGSP…SLTS). Residues 301–316 (RFEREPAVARALPRDS) are compositionally biased toward basic and acidic residues. Over residues 356–372 (TGLTSQEPSVGPGSLTS) the composition is skewed to polar residues.

The polypeptide is Islet cell autoantigen 1-like protein (Ica1l) (Mus musculus (Mouse)).